A 338-amino-acid chain; its full sequence is Ketol-acid reductoisomerase (NADP(+)) (338 aa).

A KARI N-terminal Rossmann domain is found at 1–181 (MKVYYDKDCD…GGGRTGIIET (181 aa)). NADP(+)-binding positions include 24 to 27 (YGSQ), Arg-47, Ser-50, Thr-52, and 82 to 85 (DEFQ). His-107 is an active-site residue. Position 133 (Gly-133) interacts with NADP(+). The KARI C-terminal knotted domain occupies 182-327 (TFKDETETDL…EQLRAMMPWI (146 aa)). Residues Asp-190, Glu-194, Glu-226, and Glu-230 each coordinate Mg(2+). A substrate-binding site is contributed by Ser-251.

It belongs to the ketol-acid reductoisomerase family. Mg(2+) serves as cofactor.

The catalysed reaction is (2R)-2,3-dihydroxy-3-methylbutanoate + NADP(+) = (2S)-2-acetolactate + NADPH + H(+). It carries out the reaction (2R,3R)-2,3-dihydroxy-3-methylpentanoate + NADP(+) = (S)-2-ethyl-2-hydroxy-3-oxobutanoate + NADPH + H(+). It functions in the pathway amino-acid biosynthesis; L-isoleucine biosynthesis; L-isoleucine from 2-oxobutanoate: step 2/4. Its pathway is amino-acid biosynthesis; L-valine biosynthesis; L-valine from pyruvate: step 2/4. Involved in the biosynthesis of branched-chain amino acids (BCAA). Catalyzes an alkyl-migration followed by a ketol-acid reduction of (S)-2-acetolactate (S2AL) to yield (R)-2,3-dihydroxy-isovalerate. In the isomerase reaction, S2AL is rearranged via a Mg-dependent methyl migration to produce 3-hydroxy-3-methyl-2-ketobutyrate (HMKB). In the reductase reaction, this 2-ketoacid undergoes a metal-dependent reduction by NADPH to yield (R)-2,3-dihydroxy-isovalerate. This chain is Ketol-acid reductoisomerase (NADP(+)), found in Ectopseudomonas mendocina (strain ymp) (Pseudomonas mendocina).